The following is a 736-amino-acid chain: Polyribonucleotide nucleotidyltransferase (736 aa).

Mg(2+) contacts are provided by aspartate 518 and aspartate 524. The KH domain occupies proline 584–isoleucine 644. The region spanning glycine 665 to alanine 732 is the S1 motif domain.

Belongs to the polyribonucleotide nucleotidyltransferase family. Requires Mg(2+) as cofactor.

Its subcellular location is the cytoplasm. The enzyme catalyses RNA(n+1) + phosphate = RNA(n) + a ribonucleoside 5'-diphosphate. Involved in mRNA degradation. Catalyzes the phosphorolysis of single-stranded polyribonucleotides processively in the 3'- to 5'-direction. This is Polyribonucleotide nucleotidyltransferase from Wolinella succinogenes (strain ATCC 29543 / DSM 1740 / CCUG 13145 / JCM 31913 / LMG 7466 / NCTC 11488 / FDC 602W) (Vibrio succinogenes).